The sequence spans 698 residues: Elongation factor G (698 aa).

The tr-type G domain maps to 8-290; sequence ERYRNIGISA…AVIELLPSPT (283 aa). Residues 17–24, 88–92, and 142–145 contribute to the GTP site; these read AHIDAGKT, DTPGH, and NKMD.

The protein belongs to the TRAFAC class translation factor GTPase superfamily. Classic translation factor GTPase family. EF-G/EF-2 subfamily.

Its subcellular location is the cytoplasm. In terms of biological role, catalyzes the GTP-dependent ribosomal translocation step during translation elongation. During this step, the ribosome changes from the pre-translocational (PRE) to the post-translocational (POST) state as the newly formed A-site-bound peptidyl-tRNA and P-site-bound deacylated tRNA move to the P and E sites, respectively. Catalyzes the coordinated movement of the two tRNA molecules, the mRNA and conformational changes in the ribosome. This Chromobacterium violaceum (strain ATCC 12472 / DSM 30191 / JCM 1249 / CCUG 213 / NBRC 12614 / NCIMB 9131 / NCTC 9757 / MK) protein is Elongation factor G.